Consider the following 254-residue polypeptide: MGGEEEVVSVELPAPSSWKKLFYPNKVGSVKKTEVVFVAPTGEEISNRKQLEQYLKSHPGNPAIAEFDWTTSGTPRRSARISEKTKATPSPDKEPPKKRGRTKSPVSKKDAEGEKSEGGGEENSHVKDTEMNPPEGIAENENVTDKNGSGETERVNDAKENIVAEETPNAAPVQEEGESMKEKALDSVDDKSKETDKEKDTGSIEKNSVDVEKKTVEASDEKKNSEAETRNHEENGLTTEAEGKEKTAEGEATG.

In terms of domain architecture, MBD spans 4–74 (EEEVVSVELP…AEFDWTTSGT (71 aa)). Residues 56–254 (KSHPGNPAIA…EKTAEGEATG (199 aa)) form a disordered region. Composition is skewed to basic and acidic residues over residues 80-97 (RISEKTKATPSPDKEPPK), 107-130 (SKKDAEGEKSEGGGEENSHVKDTE), 151-162 (ETERVNDAKENI), and 178-254 (ESMK…EATG). The residue at position 116 (S116) is a Phosphoserine.

In terms of tissue distribution, expressed in leaves (around hydathodes), buds, flowers (carpels and pollen grains), stems (around nodes), siliques, mature seeds and roots.

The protein localises to the nucleus. In terms of biological role, transcriptional regulator that binds DNA independently of its methylation status. Required during plant organogenesis and development. This Arabidopsis thaliana (Mouse-ear cress) protein is Methyl-CpG-binding domain-containing protein 11 (MBD11).